Reading from the N-terminus, the 119-residue chain is Na(+)/H(+) antiporter subunit G (119 aa).

Transmembrane regions (helical) follow at residues 7-29, 44-61, and 66-88; these read IISIFVLIGGFLSLLGSIGIIRF, TLGVISIMLATFLFFFLV, and VGKLLLTILFVFLTAPVAGMMMG.

It belongs to the CPA3 antiporters (TC 2.A.63) subunit G family. Forms a heterooligomeric complex that consists of seven subunits: MrpA, MrpB, MrpC, MrpD, MrpE, MrpF and MrpG.

The protein resides in the cell membrane. In terms of biological role, mnh complex is a Na(+)Li(+)/H(+) antiporter involved in Na(+) and/or Li(+) excretion and Na(+) resistance. Na(+)/H(+) antiport consumes a transmembrane electrical potential, and is thus inferred to be electrogenic. Does not transport K(+), Ca(2+) or Mg(2+). This Alkalihalophilus pseudofirmus (strain ATCC BAA-2126 / JCM 17055 / OF4) (Bacillus pseudofirmus) protein is Na(+)/H(+) antiporter subunit G (mrpG).